The following is a 179-amino-acid chain: Inosine/xanthosine triphosphatase (179 aa).

Glu-71 contributes to the Mg(2+) binding site. 71-72 (EA) provides a ligand contact to substrate.

The protein belongs to the YjjX NTPase family. As to quaternary structure, homodimer. Mg(2+) is required as a cofactor. The cofactor is Mn(2+).

The catalysed reaction is XTP + H2O = XDP + phosphate + H(+). It catalyses the reaction ITP + H2O = IDP + phosphate + H(+). Functionally, phosphatase that hydrolyzes non-canonical purine nucleotides such as XTP and ITP to their respective diphosphate derivatives. Probably excludes non-canonical purines from DNA/RNA precursor pool, thus preventing their incorporation into DNA/RNA and avoiding chromosomal lesions. The sequence is that of Inosine/xanthosine triphosphatase from Shewanella sp. (strain MR-4).